Reading from the N-terminus, the 81-residue chain is Conotoxin Im6.1 (81 aa).

Residues 1–20 form the signal peptide; that stretch reads MSKLGVVLFTLLLLVPLVTP. A propeptide spanning residues 21 to 47 is cleaved from the precursor; it reads ERDGGKWTMLAKNKKAMKRNLMDFITR. Cystine bridges form between Cys-49-Cys-61, Cys-54-Cys-67, and Cys-60-Cys-76.

Belongs to the conotoxin M superfamily. Expressed by the venom duct.

It localises to the secreted. The chain is Conotoxin Im6.1 from Conus imperialis (Imperial cone).